The following is a 315-amino-acid chain: Methionyl-tRNA formyltransferase (315 aa).

110–113 (SLLP) contacts (6S)-5,6,7,8-tetrahydrofolate.

Belongs to the Fmt family.

The enzyme catalyses L-methionyl-tRNA(fMet) + (6R)-10-formyltetrahydrofolate = N-formyl-L-methionyl-tRNA(fMet) + (6S)-5,6,7,8-tetrahydrofolate + H(+). Attaches a formyl group to the free amino group of methionyl-tRNA(fMet). The formyl group appears to play a dual role in the initiator identity of N-formylmethionyl-tRNA by promoting its recognition by IF2 and preventing the misappropriation of this tRNA by the elongation apparatus. The polypeptide is Methionyl-tRNA formyltransferase (Mycolicibacterium paratuberculosis (strain ATCC BAA-968 / K-10) (Mycobacterium paratuberculosis)).